Reading from the N-terminus, the 970-residue chain is Phosphoenolpyruvate carboxylase 1 (970 aa).

S15 is subject to Phosphoserine. Active-site residues include H177, K606, and R647.

The protein belongs to the PEPCase type 1 family. Homotetramer. The cofactor is Mg(2+).

The protein localises to the cytoplasm. It catalyses the reaction oxaloacetate + phosphate = phosphoenolpyruvate + hydrogencarbonate. It functions in the pathway photosynthesis; C4 acid pathway. By light-reversible phosphorylation. Functionally, through the carboxylation of phosphoenolpyruvate (PEP) it forms oxaloacetate, a four-carbon dicarboxylic acid source for the tricarboxylic acid cycle. This chain is Phosphoenolpyruvate carboxylase 1 (PEP1), found in Zea mays (Maize).